A 235-amino-acid polypeptide reads, in one-letter code: Elongation factor Tu, chloroplastic (235 aa).

The tr-type G domain occupies 1–125 (KNMITGAAQM…KVDSYIPTPQ (125 aa)). 47-50 (NKED) serves as a coordination point for GTP.

Belongs to the TRAFAC class translation factor GTPase superfamily. Classic translation factor GTPase family. EF-Tu/EF-1A subfamily.

The protein localises to the plastid. It is found in the chloroplast. The enzyme catalyses GTP + H2O = GDP + phosphate + H(+). Its function is as follows. GTP hydrolase that promotes the GTP-dependent binding of aminoacyl-tRNA to the A-site of ribosomes during protein biosynthesis. This is Elongation factor Tu, chloroplastic (tufA) from Gonium pectorale (Green alga).